A 302-amino-acid polypeptide reads, in one-letter code: uncharacterized protein (302 aa).

Asparagine 32, asparagine 39, and asparagine 94 each carry an N-linked (GlcNAc...) asparagine glycan. A ShKT domain is found at cysteine 80–cysteine 115. Disulfide bonds link cysteine 80/cysteine 115, cysteine 87/cysteine 108, and cysteine 98/cysteine 112. Asparagine 181 carries an N-linked (GlcNAc...) asparagine glycan.

This is an uncharacterized protein from Caenorhabditis elegans.